Consider the following 104-residue polypeptide: ATP-dependent Clp protease adapter protein ClpS (104 aa).

The protein belongs to the ClpS family. As to quaternary structure, binds to the N-terminal domain of the chaperone ClpA.

Its function is as follows. Involved in the modulation of the specificity of the ClpAP-mediated ATP-dependent protein degradation. The chain is ATP-dependent Clp protease adapter protein ClpS from Neisseria gonorrhoeae (strain ATCC 700825 / FA 1090).